Consider the following 490-residue polypeptide: Tryptophan 5-hydroxylase 2 (490 aa).

Residue Ser-19 is modified to Phosphoserine. The disordered stretch occupies residues 34–62 (LTLNKANSGKNDDKGNKGSSKNETATESG). Positions 50 to 62 (KGSSKNETATESG) are enriched in polar residues. Residues 65–140 (AVVFSLKNEV…TIVTLNPPEN (76 aa)) form the ACT domain. Residues His-318, His-323, and Glu-363 each contribute to the Fe cation site.

Belongs to the biopterin-dependent aromatic amino acid hydroxylase family. Interacts with DNAJC12. Fe(2+) serves as cofactor.

It catalyses the reaction (6R)-L-erythro-5,6,7,8-tetrahydrobiopterin + L-tryptophan + O2 = 5-hydroxy-L-tryptophan + (4aS,6R)-4a-hydroxy-L-erythro-5,6,7,8-tetrahydrobiopterin. Its pathway is aromatic compound metabolism; serotonin biosynthesis; serotonin from L-tryptophan: step 1/2. The chain is Tryptophan 5-hydroxylase 2 (TPH2) from Macaca mulatta (Rhesus macaque).